We begin with the raw amino-acid sequence, 428 residues long: Dihydroorotase (428 aa).

Zn(2+)-binding residues include His59 and His61. Substrate-binding positions include 61–63 and Asn93; that span reads HLR. Zn(2+) contacts are provided by Asp151, His178, and His231. Position 277 (Asn277) interacts with substrate. Asp304 provides a ligand contact to Zn(2+). Residue Asp304 is part of the active site. Substrate-binding positions include His308 and 322 to 323; that span reads FG.

This sequence belongs to the metallo-dependent hydrolases superfamily. DHOase family. Class I DHOase subfamily. Zn(2+) serves as cofactor.

It catalyses the reaction (S)-dihydroorotate + H2O = N-carbamoyl-L-aspartate + H(+). Its pathway is pyrimidine metabolism; UMP biosynthesis via de novo pathway; (S)-dihydroorotate from bicarbonate: step 3/3. Its function is as follows. Catalyzes the reversible cyclization of carbamoyl aspartate to dihydroorotate. The chain is Dihydroorotase from Bacillus cereus (strain ATCC 14579 / DSM 31 / CCUG 7414 / JCM 2152 / NBRC 15305 / NCIMB 9373 / NCTC 2599 / NRRL B-3711).